The primary structure comprises 187 residues: GTP cyclohydrolase 1 (187 aa).

Cysteine 76, histidine 79, and cysteine 148 together coordinate Zn(2+).

This sequence belongs to the GTP cyclohydrolase I family. As to quaternary structure, toroid-shaped homodecamer, composed of two pentamers of five dimers.

The enzyme catalyses GTP + H2O = 7,8-dihydroneopterin 3'-triphosphate + formate + H(+). It functions in the pathway cofactor biosynthesis; 7,8-dihydroneopterin triphosphate biosynthesis; 7,8-dihydroneopterin triphosphate from GTP: step 1/1. This is GTP cyclohydrolase 1 from Streptococcus thermophilus (strain CNRZ 1066).